Here is a 515-residue protein sequence, read N- to C-terminus: Cytochrome P450 76C3 (515 aa).

A helical transmembrane segment spans residues 5-25 (LIQGMSLPLYFLLTLFFFFFA). Position 451 (Cys451) interacts with heme.

Belongs to the cytochrome P450 family. Heme serves as cofactor.

The protein resides in the membrane. The polypeptide is Cytochrome P450 76C3 (CYP76C3) (Arabidopsis thaliana (Mouse-ear cress)).